The chain runs to 1033 residues: Isoleucine--tRNA ligase (1033 aa).

The 'HIGH' region signature appears at 47 to 57 (PTANGLPHVGH). A 'KMSKS' region motif is present at residues 590 to 594 (KMSKS). Lys593 contacts ATP.

This sequence belongs to the class-I aminoacyl-tRNA synthetase family. IleS type 2 subfamily. Monomer. Zn(2+) serves as cofactor.

Its subcellular location is the cytoplasm. It catalyses the reaction tRNA(Ile) + L-isoleucine + ATP = L-isoleucyl-tRNA(Ile) + AMP + diphosphate. Its function is as follows. Catalyzes the attachment of isoleucine to tRNA(Ile). As IleRS can inadvertently accommodate and process structurally similar amino acids such as valine, to avoid such errors it has two additional distinct tRNA(Ile)-dependent editing activities. One activity is designated as 'pretransfer' editing and involves the hydrolysis of activated Val-AMP. The other activity is designated 'posttransfer' editing and involves deacylation of mischarged Val-tRNA(Ile). This chain is Isoleucine--tRNA ligase, found in Bacillus thuringiensis (strain Al Hakam).